Here is a 199-residue protein sequence, read N- to C-terminus: FMN-dependent NADH:quinone oxidoreductase (199 aa).

Residues serine 9 and 95-98 (MYNF) each bind FMN.

This sequence belongs to the azoreductase type 1 family. As to quaternary structure, homodimer. The cofactor is FMN.

The enzyme catalyses 2 a quinone + NADH + H(+) = 2 a 1,4-benzosemiquinone + NAD(+). It carries out the reaction N,N-dimethyl-1,4-phenylenediamine + anthranilate + 2 NAD(+) = 2-(4-dimethylaminophenyl)diazenylbenzoate + 2 NADH + 2 H(+). Functionally, quinone reductase that provides resistance to thiol-specific stress caused by electrophilic quinones. In terms of biological role, also exhibits azoreductase activity. Catalyzes the reductive cleavage of the azo bond in aromatic azo compounds to the corresponding amines. The polypeptide is FMN-dependent NADH:quinone oxidoreductase (Dechloromonas aromatica (strain RCB)).